The following is a 46-amino-acid chain: Defensin-1 (46 aa).

Intrachain disulfides connect cysteine 3-cysteine 46, cysteine 14-cysteine 35, cysteine 20-cysteine 40, and cysteine 24-cysteine 42.

It belongs to the DEFL family. As to expression, epidermis and vascular bundles of pods, stems, roots, leaves and wet or dry seeds.

Its function is as follows. Possesses antifungal activity sensitive to inorganic cations. This Pisum sativum (Garden pea) protein is Defensin-1.